Here is a 220-residue protein sequence, read N- to C-terminus: Probable nicotinate-nucleotide adenylyltransferase (220 aa).

This sequence belongs to the NadD family.

It catalyses the reaction nicotinate beta-D-ribonucleotide + ATP + H(+) = deamido-NAD(+) + diphosphate. It participates in cofactor biosynthesis; NAD(+) biosynthesis; deamido-NAD(+) from nicotinate D-ribonucleotide: step 1/1. Its function is as follows. Catalyzes the reversible adenylation of nicotinate mononucleotide (NaMN) to nicotinic acid adenine dinucleotide (NaAD). The polypeptide is Probable nicotinate-nucleotide adenylyltransferase (Laribacter hongkongensis (strain HLHK9)).